The sequence spans 443 residues: Probable glycine dehydrogenase (decarboxylating) subunit 1 (443 aa).

Belongs to the GcvP family. N-terminal subunit subfamily. The glycine cleavage system is composed of four proteins: P, T, L and H. In this organism, the P 'protein' is a heterodimer of two subunits.

It carries out the reaction N(6)-[(R)-lipoyl]-L-lysyl-[glycine-cleavage complex H protein] + glycine + H(+) = N(6)-[(R)-S(8)-aminomethyldihydrolipoyl]-L-lysyl-[glycine-cleavage complex H protein] + CO2. Functionally, the glycine cleavage system catalyzes the degradation of glycine. The P protein binds the alpha-amino group of glycine through its pyridoxal phosphate cofactor; CO(2) is released and the remaining methylamine moiety is then transferred to the lipoamide cofactor of the H protein. The protein is Probable glycine dehydrogenase (decarboxylating) subunit 1 of Maridesulfovibrio salexigens (strain ATCC 14822 / DSM 2638 / NCIMB 8403 / VKM B-1763) (Desulfovibrio salexigens).